Consider the following 252-residue polypeptide: Trans-aconitate 2-methyltransferase (252 aa).

This sequence belongs to the methyltransferase superfamily. Tam family.

The protein resides in the cytoplasm. It carries out the reaction trans-aconitate + S-adenosyl-L-methionine = (E)-3-(methoxycarbonyl)pent-2-enedioate + S-adenosyl-L-homocysteine. Functionally, catalyzes the S-adenosylmethionine monomethyl esterification of trans-aconitate. This Escherichia coli O9:H4 (strain HS) protein is Trans-aconitate 2-methyltransferase.